We begin with the raw amino-acid sequence, 35 residues long: Photosystem II reaction center protein T (35 aa).

A helical membrane pass occupies residues 3 to 23; it reads ALVYTFLLVSTLGIIFFAIFF.

The protein belongs to the PsbT family. In terms of assembly, PSII is composed of 1 copy each of membrane proteins PsbA, PsbB, PsbC, PsbD, PsbE, PsbF, PsbH, PsbI, PsbJ, PsbK, PsbL, PsbM, PsbT, PsbY, PsbZ, Psb30/Ycf12, at least 3 peripheral proteins of the oxygen-evolving complex and a large number of cofactors. It forms dimeric complexes.

It localises to the plastid. The protein localises to the chloroplast thylakoid membrane. Functionally, found at the monomer-monomer interface of the photosystem II (PS II) dimer, plays a role in assembly and dimerization of PSII. PSII is a light-driven water plastoquinone oxidoreductase, using light energy to abstract electrons from H(2)O, generating a proton gradient subsequently used for ATP formation. The protein is Photosystem II reaction center protein T of Asarum canadense (Wild ginger).